A 201-amino-acid polypeptide reads, in one-letter code: Small ribosomal subunit protein uS4c (201 aa).

Residues 89–157 enclose the S4 RNA-binding domain; it reads MRLDNILFRL…VQNYIASSDP (69 aa).

It belongs to the universal ribosomal protein uS4 family. In terms of assembly, part of the 30S ribosomal subunit. Contacts protein S5. The interaction surface between S4 and S5 is involved in control of translational fidelity.

Its subcellular location is the plastid. It localises to the chloroplast. In terms of biological role, one of the primary rRNA binding proteins, it binds directly to 16S rRNA where it nucleates assembly of the body of the 30S subunit. Its function is as follows. With S5 and S12 plays an important role in translational accuracy. The protein is Small ribosomal subunit protein uS4c (rps4) of Hordeum vulgare (Barley).